Consider the following 351-residue polypeptide: MEEEKILESDLRHISFVMPKYTPIEKIGEGSFSVVYKALDAESGRYVALKAITRTSSPARVLDEMMFLKTLGGRKNCMGLLGCFRNEDQVVAVFPYFEPIDFREFISNANLADIKRYLHNLLIAIEHVHSNGIMHRDLKPGNFLYNKESGRGMLIDFGLAQYEEYSEGQHAEGGAKPAGPLLFFNSVVSKTKPPGYYERDGRPPMKAPRAGTRGFRAPEVLFRCQRQTGAIDMWSVGVIFLTILTTQYPFFYSSDDIDSIVEIATIFGHAEMRKAAKFYGRVWRSNIDSIPEERIPFETIVESLNPWAEIGSDGYDLLYRMLDLCSSSRITASDALSHPFFDDLKTHENCA.

Residues 21–341 enclose the Protein kinase domain; that stretch reads YTPIEKIGEG…ASDALSHPFF (321 aa). ATP is bound by residues 27–35 and lysine 50; that span reads IGEGSFSVV. Aspartate 137 functions as the Proton acceptor in the catalytic mechanism.

The protein belongs to the protein kinase superfamily. Ser/Thr protein kinase family. CDC7 subfamily. The cofactor is Mg(2+).

It catalyses the reaction L-seryl-[protein] + ATP = O-phospho-L-seryl-[protein] + ADP + H(+). It carries out the reaction L-threonyl-[protein] + ATP = O-phospho-L-threonyl-[protein] + ADP + H(+). In terms of biological role, serine/threonine-protein kinase. Needed for the initiation of DNA synthesis during mitosis as well as for synaptonemal complex formation and commitment to recombination during meiosis. The chain is Probable cell division control protein 7 homolog 1 (CDC7-1) from Encephalitozoon cuniculi (strain GB-M1) (Microsporidian parasite).